Here is a 297-residue protein sequence, read N- to C-terminus: Acetyl-coenzyme A carboxylase carboxyl transferase subunit beta (297 aa).

The segment at 1–23 is disordered; sequence MSWIERILGRTSSSSSSSKSKVP. Positions 26 to 295 constitute a CoA carboxyltransferase N-terminal domain; it reads VWTKCTSCEQ…PFKTAELIVE (270 aa). Zn(2+) contacts are provided by Cys-30, Cys-33, Cys-49, and Cys-52. The C4-type zinc-finger motif lies at 30-52; it reads CTSCEQVLYSEELKRNMHVCPKC.

This sequence belongs to the AccD/PCCB family. In terms of assembly, acetyl-CoA carboxylase is a heterohexamer composed of biotin carboxyl carrier protein (AccB), biotin carboxylase (AccC) and two subunits each of ACCase subunit alpha (AccA) and ACCase subunit beta (AccD). It depends on Zn(2+) as a cofactor.

The protein resides in the cytoplasm. The enzyme catalyses N(6)-carboxybiotinyl-L-lysyl-[protein] + acetyl-CoA = N(6)-biotinyl-L-lysyl-[protein] + malonyl-CoA. It functions in the pathway lipid metabolism; malonyl-CoA biosynthesis; malonyl-CoA from acetyl-CoA: step 1/1. Its function is as follows. Component of the acetyl coenzyme A carboxylase (ACC) complex. Biotin carboxylase (BC) catalyzes the carboxylation of biotin on its carrier protein (BCCP) and then the CO(2) group is transferred by the transcarboxylase to acetyl-CoA to form malonyl-CoA. The polypeptide is Acetyl-coenzyme A carboxylase carboxyl transferase subunit beta (Actinobacillus pleuropneumoniae serotype 7 (strain AP76)).